The primary structure comprises 438 residues: UDP-N-acetylmuramoylalanine--D-glutamate ligase (438 aa).

Residue 112–118 (GSNGKST) coordinates ATP.

It belongs to the MurCDEF family.

The protein localises to the cytoplasm. The enzyme catalyses UDP-N-acetyl-alpha-D-muramoyl-L-alanine + D-glutamate + ATP = UDP-N-acetyl-alpha-D-muramoyl-L-alanyl-D-glutamate + ADP + phosphate + H(+). It participates in cell wall biogenesis; peptidoglycan biosynthesis. Functionally, cell wall formation. Catalyzes the addition of glutamate to the nucleotide precursor UDP-N-acetylmuramoyl-L-alanine (UMA). The sequence is that of UDP-N-acetylmuramoylalanine--D-glutamate ligase from Escherichia coli O6:K15:H31 (strain 536 / UPEC).